The sequence spans 316 residues: D-alanine--D-alanine ligase (316 aa).

The 199-residue stretch at 112-310 (KTALKAHGLP…FGKLCRWLVE (199 aa)) folds into the ATP-grasp domain. 139–189 (MATPYVVKPNNEGSSVGVYLVNEAANGPPHLSDDMPDEVMVETYAPGRELT) provides a ligand contact to ATP. D261, E277, and N279 together coordinate Mg(2+).

Belongs to the D-alanine--D-alanine ligase family. Mg(2+) is required as a cofactor. The cofactor is Mn(2+).

The protein resides in the cytoplasm. The enzyme catalyses 2 D-alanine + ATP = D-alanyl-D-alanine + ADP + phosphate + H(+). Its pathway is cell wall biogenesis; peptidoglycan biosynthesis. Functionally, cell wall formation. The sequence is that of D-alanine--D-alanine ligase from Jannaschia sp. (strain CCS1).